A 349-amino-acid polypeptide reads, in one-letter code: Tribbles homolog 3 (349 aa).

The interaction with DDIT3/CHOP stretch occupies residues 1-122 (MRATSLAASA…QHVARPTEVL (122 aa)). Residues 35–57 (VRDEPEPGPTPSLPPASDLSPAV) form a disordered region. Residues 63 to 310 (LGPYILLERE…ALGILLHPWL (248 aa)) enclose the Protein kinase domain. Residues 317–349 (VSPPRSDRREMDQVVPDGPQLEEAEEGEVGLYG) form a disordered region. Residues 336 to 349 (QLEEAEEGEVGLYG) are compositionally biased toward acidic residues.

This sequence belongs to the protein kinase superfamily. CAMK Ser/Thr protein kinase family. Tribbles subfamily. Interacts with AKT1, AKT2, MAP2K1 and MAP2K7. Interacts with ATF4. Interacts with DDIT3/CHOP and inhibits its interaction with EP300/P300. Interacts with APOBEC3C. Interacts (via N-terminus) with APOBEC3A. Interacts with RELA. In terms of tissue distribution, detected only in the lung. Not detected in the heart, brain, spleen, liver, skeletal muscle, kidney and testis.

It is found in the nucleus. Its function is as follows. Inactive protein kinase which acts as a regulator of the integrated stress response (ISR), a process for adaptation to various stress. Inhibits the transcriptional activity of DDIT3/CHOP and is involved in DDIT3/CHOP-dependent cell death during ER stress. May play a role in programmed neuronal cell death but does not appear to affect non-neuronal cells. Acts as a negative feedback regulator of the ATF4-dependent transcription during the ISR: while TRIB3 expression is promoted by ATF4, TRIB3 protein interacts with ATF4 and inhibits ATF4 transcription activity. Disrupts insulin signaling by binding directly to Akt kinases and blocking their activation. May bind directly to and mask the 'Thr-308' phosphorylation site in AKT1. Interacts with the NF-kappa-B transactivator p65 RELA and inhibits its phosphorylation and thus its transcriptional activation activity. Interacts with MAPK kinases and regulates activation of MAP kinases. Can inhibit APOBEC3A editing of nuclear DNA. The sequence is that of Tribbles homolog 3 (Trib3) from Rattus norvegicus (Rat).